The sequence spans 386 residues: Putative F-box/kelch-repeat protein At4g11750 (386 aa).

The 47-residue stretch at 5 to 51 (PVDLPYIPDDLLLNCLARVSRLYYPILSLVSKRFRSLVASLELYEIR) folds into the F-box domain. Kelch repeat units lie at residues 187 to 236 (KIYV…VYDG), 238 to 285 (LYLF…YGRS), and 287 to 324 (VLMW…GYSG).

The sequence is that of Putative F-box/kelch-repeat protein At4g11750 from Arabidopsis thaliana (Mouse-ear cress).